The sequence spans 498 residues: Beta-amylase 5 (498 aa).

Substrate-binding residues include Asp56, His96, and Asp104. Residue Glu189 is the Proton donor of the active site. Residues Lys298, His303, and Thr345 each coordinate substrate. Glu383 (proton acceptor) is an active-site residue. Substrate contacts are provided by residues 384 to 385 (NA) and Arg423.

Belongs to the glycosyl hydrolase 14 family. Detected in phloem sieve elements.

It localises to the cytoplasm. The enzyme catalyses Hydrolysis of (1-&gt;4)-alpha-D-glucosidic linkages in polysaccharides so as to remove successive maltose units from the non-reducing ends of the chains.. Its function is as follows. Beta-amylase activity. Major cytosolic beta-amylase isoform in rosette leaves and inflorescences stems. This is Beta-amylase 5 (BAM5) from Arabidopsis thaliana (Mouse-ear cress).